A 128-amino-acid chain; its full sequence is NHP2-like protein 1 (128 aa).

Residues 36-48 are interaction with U4 snRNA and U4atac snRNA; that stretch reads RKGANEATKTLNR. The interval 96–128 is important for U4 snRNA-binding; it reads SRPVIACAVTIKEGSQLKPQIQSLQQSIERLLV.

It belongs to the eukaryotic ribosomal protein eL8 family. As to quaternary structure, identified in the spliceosome B complex. Component of the U4/U6-U5 tri-snRNP complex. Part of the small subunit (SSU) processome, composed of more than 70 proteins and the RNA chaperone small nucleolar RNA (snoRNA) U3.

The protein resides in the nucleus. It localises to the nucleolus. Part of the small subunit (SSU) processome, first precursor of the small eukaryotic ribosomal subunit. During the assembly of the SSU processome in the nucleolus, many ribosome biogenesis factors, an RNA chaperone and ribosomal proteins associate with the nascent pre-rRNA and work in concert to generate RNA folding, modifications, rearrangements and cleavage as well as targeted degradation of pre-ribosomal RNA by the RNA exosome. Involved in pre-mRNA splicing as component of the spliceosome. Binds to the 5'-stem-loop of U4 snRNA and thereby contributes to spliceosome assembly. The protein undergoes a conformational change upon RNA-binding. Core component of box C/D small nucleolar ribonucleoprotein (snoRNP) complexes that function in methylation of multiple sites on ribosomal RNAs (rRNAs) and messenger RNAs (mRNAs). This is NHP2-like protein 1 from Xenopus tropicalis (Western clawed frog).